The sequence spans 1958 residues: Probable Rho GTPase-activating protein CG5521 (1958 aa).

Disordered stretches follow at residues 1–21 (MFTKKSHADVKKSTAKLQDSK), 400–424 (PPFLLEPNDDPPPPSNAGGTPRSQR), and 635–804 (GSVW…GIEG). Residues 400 to 414 (PPFLLEPNDDPPPPS) show a composition bias toward pro residues. The segment covering 640-656 (GSGSNSAANGGSAASAA) has biased composition (low complexity). 3 positions are modified to phosphoserine: Ser-718, Ser-764, and Ser-767. The span at 758-774 (DLRRAMSLDSLARKGDA) shows a compositional bias: basic and acidic residues. The span at 775 to 785 (EETDSYQEGDN) shows a compositional bias: acidic residues. A phosphoserine mark is found at Ser-787, Ser-791, Ser-793, and Ser-795. A compositionally biased stretch (polar residues) spans 788–800 (GAGSRSPSPTASS). Tyr-980 is subject to Phosphotyrosine. Positions 1534–1568 (HSTQAPSPALRHASSNSSLQQPDQRSLHSTTASFD) are disordered. Over residues 1546–1568 (ASSNSSLQQPDQRSLHSTTASFD) the composition is skewed to polar residues. Phosphoserine is present on Ser-1551. The 208-residue stretch at 1612-1819 (LRNVDLQKCR…EERNRSLDSV (208 aa)) folds into the Rap-GAP domain. Residues 1903–1958 (ATGMSSASPRGPRKLGAPFKSVTKKHSLQHIAVGGGAGAGGDTPPESPTLPQRRFK) are disordered. Residue Thr-1945 is modified to Phosphothreonine. At Ser-1949 the chain carries Phosphoserine.

This is Probable Rho GTPase-activating protein CG5521 from Drosophila melanogaster (Fruit fly).